We begin with the raw amino-acid sequence, 556 residues long: Formate--tetrahydrofolate ligase (556 aa).

Residue T65–S72 participates in ATP binding.

Belongs to the formate--tetrahydrofolate ligase family.

The enzyme catalyses (6S)-5,6,7,8-tetrahydrofolate + formate + ATP = (6R)-10-formyltetrahydrofolate + ADP + phosphate. The protein operates within one-carbon metabolism; tetrahydrofolate interconversion. This chain is Formate--tetrahydrofolate ligase, found in Elusimicrobium minutum (strain Pei191).